The sequence spans 615 residues: Pentatricopeptide repeat-containing protein At2g25580 (615 aa).

The disordered stretch occupies residues 40-98; that stretch reads FGNSNDSSEMNPREGYNGRIQNRTGSSGEVSESIHTQSQSLGSNQGRNEQSWKQSPSLS. A compositionally biased stretch (polar residues) spans 58-98; sequence RIQNRTGSSGEVSESIHTQSQSLGSNQGRNEQSWKQSPSLS. PPR repeat units lie at residues 288–318, 319–353, 354–389, and 390–420; these read DLSS…MSEK, NLET…GNIP, DGQL…GIAP, and SIED…MPME. The interval 490–520 is type E(+) motif; sequence SSMQEFRAGDTNLPENDELFQLLRNLKMHMV. Residues 521 to 615 are type DYW motif; the sequence is EVGYVAETRM…NGACTCKDYW (95 aa).

It belongs to the PPR family. PCMP-H subfamily.

The chain is Pentatricopeptide repeat-containing protein At2g25580 (PCMP-H75) from Arabidopsis thaliana (Mouse-ear cress).